Here is a 533-residue protein sequence, read N- to C-terminus: CWF19-like protein 1 homolog (533 aa).

The segment at 290 to 314 is disordered; that stretch reads EMGGAEDGAGNGRKRHNDGGNDGPR.

This sequence belongs to the CWF19 family.

The sequence is that of CWF19-like protein 1 homolog from Caenorhabditis elegans.